A 53-amino-acid polypeptide reads, in one-letter code: UPF0391 membrane protein gsr2640 (53 aa).

2 helical membrane-spanning segments follow: residues 4 to 24 (LLWL…GGVV) and 32 to 49 (WFLI…FVTG).

Belongs to the UPF0391 family.

Its subcellular location is the cell membrane. The chain is UPF0391 membrane protein gsr2640 from Gloeobacter violaceus (strain ATCC 29082 / PCC 7421).